A 428-amino-acid chain; its full sequence is Serine--tRNA ligase (428 aa).

L-serine is bound at residue 231–233; sequence TSE. ATP-binding positions include 262–264 and Val278; that span reads RRE. Glu285 lines the L-serine pocket. 349 to 352 contributes to the ATP binding site; the sequence is ELTS. Thr384 contributes to the L-serine binding site.

This sequence belongs to the class-II aminoacyl-tRNA synthetase family. Type-1 seryl-tRNA synthetase subfamily. As to quaternary structure, homodimer. The tRNA molecule binds across the dimer.

Its subcellular location is the cytoplasm. The catalysed reaction is tRNA(Ser) + L-serine + ATP = L-seryl-tRNA(Ser) + AMP + diphosphate + H(+). It carries out the reaction tRNA(Sec) + L-serine + ATP = L-seryl-tRNA(Sec) + AMP + diphosphate + H(+). It participates in aminoacyl-tRNA biosynthesis; selenocysteinyl-tRNA(Sec) biosynthesis; L-seryl-tRNA(Sec) from L-serine and tRNA(Sec): step 1/1. Its function is as follows. Catalyzes the attachment of serine to tRNA(Ser). Is also able to aminoacylate tRNA(Sec) with serine, to form the misacylated tRNA L-seryl-tRNA(Sec), which will be further converted into selenocysteinyl-tRNA(Sec). The protein is Serine--tRNA ligase of Bifidobacterium longum (strain NCC 2705).